The following is a 383-amino-acid chain: Acetylornithine deacetylase (383 aa).

Histidine 80 is a binding site for Zn(2+). The active site involves aspartate 82. Aspartate 112 provides a ligand contact to Zn(2+). Glutamate 144 is a catalytic residue. Residues glutamate 145, glutamate 169, and histidine 355 each coordinate Zn(2+).

The protein belongs to the peptidase M20A family. ArgE subfamily. In terms of assembly, homodimer. It depends on Zn(2+) as a cofactor. Co(2+) serves as cofactor. The cofactor is glutathione.

Its subcellular location is the cytoplasm. It carries out the reaction N(2)-acetyl-L-ornithine + H2O = L-ornithine + acetate. Its pathway is amino-acid biosynthesis; L-arginine biosynthesis; L-ornithine from N(2)-acetyl-L-ornithine (linear): step 1/1. Functionally, catalyzes the hydrolysis of the amide bond of N(2)-acetylated L-amino acids. Cleaves the acetyl group from N-acetyl-L-ornithine to form L-ornithine, an intermediate in L-arginine biosynthesis pathway, and a branchpoint in the synthesis of polyamines. This is Acetylornithine deacetylase from Salmonella arizonae (strain ATCC BAA-731 / CDC346-86 / RSK2980).